The primary structure comprises 289 residues: Diaminopimelate epimerase (289 aa).

Substrate-binding residues include asparagine 11 and asparagine 78. Cysteine 87 functions as the Proton donor in the catalytic mechanism. Substrate contacts are provided by residues 88–89, asparagine 163, asparagine 199, and 217–218; these read GN and ER. The active-site Proton acceptor is the cysteine 226. Residue 227–228 coordinates substrate; sequence GT.

The protein belongs to the diaminopimelate epimerase family. Homodimer.

The protein localises to the cytoplasm. The catalysed reaction is (2S,6S)-2,6-diaminopimelate = meso-2,6-diaminopimelate. It functions in the pathway amino-acid biosynthesis; L-lysine biosynthesis via DAP pathway; DL-2,6-diaminopimelate from LL-2,6-diaminopimelate: step 1/1. Functionally, catalyzes the stereoinversion of LL-2,6-diaminopimelate (L,L-DAP) to meso-diaminopimelate (meso-DAP), a precursor of L-lysine and an essential component of the bacterial peptidoglycan. The protein is Diaminopimelate epimerase of Mycolicibacterium vanbaalenii (strain DSM 7251 / JCM 13017 / BCRC 16820 / KCTC 9966 / NRRL B-24157 / PYR-1) (Mycobacterium vanbaalenii).